The primary structure comprises 668 residues: Kelch repeat-containing protein ARB_01230 (668 aa).

An N-terminal signal peptide occupies residues 1–32 (MEVGRFASKSASMTYLLLVLLVGFILPQQGQH). Residues 33 to 522 (AHARTLARRD…GSGSDGPNIA (490 aa)) lie on the Extracellular side of the membrane. N-linked (GlcNAc...) asparagine glycosylation is present at asparagine 60. Kelch repeat units lie at residues 62-108 (TLYI…PRGD) and 125-176 (SLFL…ANIP). Asparagine 251 and asparagine 291 each carry an N-linked (GlcNAc...) asparagine glycan. Kelch repeat units lie at residues 283–331 (ILGL…AVAA), 340–395 (QVYL…IWNS), 396–445 (QIVV…ASQT), and 463–509 (VQSV…GPHA). The helical transmembrane segment at 523–543 (AIVAGVIAGCLGVLAIYLGFV) threads the bilayer. The Cytoplasmic segment spans residues 544-668 (TWLYRRRLAI…PRQTLRVINQ (125 aa)). Residues 611 to 642 (DNQRHNHTRSSSGGNFDHLAQPERPSTSSSVE) are disordered.

It is found in the membrane. The protein localises to the secreted. This Arthroderma benhamiae (strain ATCC MYA-4681 / CBS 112371) (Trichophyton mentagrophytes) protein is Kelch repeat-containing protein ARB_01230.